The primary structure comprises 145 residues: Transcriptional regulator MraZ (145 aa).

2 consecutive SpoVT-AbrB domains span residues 5-49 (TYNH…LESE) and 78-121 (TYKV…AKEV).

It belongs to the MraZ family. Forms oligomers.

Its subcellular location is the cytoplasm. The protein localises to the nucleoid. This Ureaplasma urealyticum serovar 10 (strain ATCC 33699 / Western) protein is Transcriptional regulator MraZ.